Consider the following 578-residue polypeptide: CTP synthase 2 (578 aa).

One can recognise a Glutamine amidotransferase type-1 domain in the interval 300–553; the sequence is SIALVGKYTK…MLAASGKLNT (254 aa). Active-site for GATase activity residues include cysteine 399, histidine 526, and glutamate 528.

This sequence belongs to the CTP synthase family.

The catalysed reaction is UTP + L-glutamine + ATP + H2O = CTP + L-glutamate + ADP + phosphate + 2 H(+). It participates in pyrimidine metabolism; CTP biosynthesis via de novo pathway; CTP from UDP: step 2/2. Its function is as follows. Catalyzes the ATP-dependent amination of UTP to CTP with either L-glutamine or ammonia as the source of nitrogen. Constitutes the rate-limiting enzyme in the synthesis of cytosine nucleotides. The chain is CTP synthase 2 (ctps2) from Xenopus laevis (African clawed frog).